Consider the following 346-residue polypeptide: tRNA N6-adenosine threonylcarbamoyltransferase (346 aa).

Fe cation contacts are provided by His110 and His114. Substrate is bound by residues 132-136 (LLSGG), Asp165, Gly178, and Asn274. Asp298 contacts Fe cation.

This sequence belongs to the KAE1 / TsaD family. It depends on Fe(2+) as a cofactor.

Its subcellular location is the cytoplasm. It catalyses the reaction L-threonylcarbamoyladenylate + adenosine(37) in tRNA = N(6)-L-threonylcarbamoyladenosine(37) in tRNA + AMP + H(+). Its function is as follows. Required for the formation of a threonylcarbamoyl group on adenosine at position 37 (t(6)A37) in tRNAs that read codons beginning with adenine. Is involved in the transfer of the threonylcarbamoyl moiety of threonylcarbamoyl-AMP (TC-AMP) to the N6 group of A37, together with TsaE and TsaB. TsaD likely plays a direct catalytic role in this reaction. The protein is tRNA N6-adenosine threonylcarbamoyltransferase of Borreliella burgdorferi (strain ATCC 35210 / DSM 4680 / CIP 102532 / B31) (Borrelia burgdorferi).